We begin with the raw amino-acid sequence, 263 residues long: 3'-5' ssDNA/RNA exonuclease TatD (263 aa).

A divalent metal cation is bound by residues glutamate 91, histidine 127, and histidine 152.

This sequence belongs to the metallo-dependent hydrolases superfamily. TatD-type hydrolase family. TatD subfamily. Monomer. Mg(2+) serves as cofactor.

It is found in the cytoplasm. In terms of biological role, 3'-5' exonuclease that prefers single-stranded DNA and RNA. May play a role in the H(2)O(2)-induced DNA damage repair. This chain is 3'-5' ssDNA/RNA exonuclease TatD, found in Citrobacter rodentium (strain ICC168) (Citrobacter freundii biotype 4280).